We begin with the raw amino-acid sequence, 231 residues long: Protoporphyrinogen IX dehydrogenase [quinone] (231 aa).

Residues 8-178 form the Flavodoxin-like domain; that stretch reads CLMLYSTTDG…AVRRFASDFA (171 aa). FMN is bound by residues 14-18 and 90-158; these read TTDGH and FFSV…ETDS. The helical transmembrane segment at 208–228 threads the bilayer; that stretch reads CLLAIVGMSAAVIVGIRIIAA.

It belongs to the HemG family. Requires FMN as cofactor.

It is found in the membrane. The enzyme catalyses protoporphyrinogen IX + 3 a menaquinone = protoporphyrin IX + 3 a menaquinol. It carries out the reaction protoporphyrinogen IX + 3 a ubiquinone = protoporphyrin IX + 3 a ubiquinol. The catalysed reaction is protoporphyrinogen IX + 3 a quinone = protoporphyrin IX + 3 a quinol. The protein operates within porphyrin-containing compound metabolism; protoporphyrin-IX biosynthesis; protoporphyrin-IX from protoporphyrinogen-IX: step 1/1. Its function is as follows. In E.coli extracts under anerobic conditions catalyzes the 6-electron oxidation of protoporphyrinogen IX to form protoporphyrin IX, transferring electrons to fumarate reductase, presumably via menaquinone. In vitro under aerobic conditions forms protoporphyrin IX using ubiquinone as an electron acceptor. Complements an E.coli hemG deletion, allowing normal growth in vivo. The sequence is that of Protoporphyrinogen IX dehydrogenase [quinone] from Leishmania major.